The following is a 168-amino-acid chain: MSAVDPIADMFSAIKNAIMRRDAFLYVPSSKMKERILEVLKREGFIQDWEALKGEKYEEEFKKMKELAEKSPNPKMRRYLQQLIDYNKGTQYPLKIYLKYLDPKKRRSALTNIVRVSKGGRRVYAGVRTMPYVKRGLGIAIVSTDAGVMTDHEARKLRKGGEVIAFVW.

Positions 59–93 are not found in other S8 sequences; it reads EEFKKMKELAEKSPNPKMRRYLQQLIDYNKGTQYP.

The protein belongs to the universal ribosomal protein uS8 family. Part of the 30S ribosomal subunit. Contacts proteins S5 and S12.

One of the primary rRNA binding proteins, it binds directly to 16S rRNA central domain where it helps coordinate assembly of the platform of the 30S subunit. The sequence is that of Small ribosomal subunit protein uS8 from Aquifex pyrophilus.